A 102-amino-acid chain; its full sequence is Large ribosomal subunit protein bL21 (102 aa).

The protein belongs to the bacterial ribosomal protein bL21 family. Part of the 50S ribosomal subunit. Contacts protein L20.

Functionally, this protein binds to 23S rRNA in the presence of protein L20. In Desulfovibrio desulfuricans (strain ATCC 27774 / DSM 6949 / MB), this protein is Large ribosomal subunit protein bL21.